The sequence spans 296 residues: Tyrosine recombinase XerC (296 aa).

Residues 1-84 (MEKIQQAYLY…TLRSFYEYWM (84 aa)) form the Core-binding (CB) domain. Residues 105–286 (YLPHFFYEEE…TNEQLRKVYL (182 aa)) enclose the Tyr recombinase domain. Residues Arg145, Lys169, His238, Arg241, and His264 contribute to the active site. Tyr273 serves as the catalytic O-(3'-phospho-DNA)-tyrosine intermediate.

This sequence belongs to the 'phage' integrase family. XerC subfamily. In terms of assembly, forms a cyclic heterotetrameric complex composed of two molecules of XerC and two molecules of XerD.

The protein localises to the cytoplasm. Its function is as follows. Site-specific tyrosine recombinase, which acts by catalyzing the cutting and rejoining of the recombining DNA molecules. The XerC-XerD complex is essential to convert dimers of the bacterial chromosome into monomers to permit their segregation at cell division. It also contributes to the segregational stability of plasmids. This chain is Tyrosine recombinase XerC, found in Staphylococcus saprophyticus subsp. saprophyticus (strain ATCC 15305 / DSM 20229 / NCIMB 8711 / NCTC 7292 / S-41).